The primary structure comprises 128 residues: Large ribosomal subunit protein bL17 (128 aa).

This sequence belongs to the bacterial ribosomal protein bL17 family. In terms of assembly, part of the 50S ribosomal subunit. Contacts protein L32.

The polypeptide is Large ribosomal subunit protein bL17 (Petrotoga mobilis (strain DSM 10674 / SJ95)).